Reading from the N-terminus, the 261-residue chain is Sulfur carrier protein FdhD (261 aa).

The active-site Cysteine persulfide intermediate is the Cys-105. Residue 245–250 (FIRGDR) participates in Mo-bis(molybdopterin guanine dinucleotide) binding.

This sequence belongs to the FdhD family.

Its subcellular location is the cytoplasm. Required for formate dehydrogenase (FDH) activity. Acts as a sulfur carrier protein that transfers sulfur from IscS to the molybdenum cofactor prior to its insertion into FDH. The chain is Sulfur carrier protein FdhD from Listeria innocua serovar 6a (strain ATCC BAA-680 / CLIP 11262).